The sequence spans 388 residues: Phosphopentomutase (388 aa).

Residues Asp10, Asp282, His287, Asp323, His324, and His335 each coordinate Mn(2+).

The protein belongs to the phosphopentomutase family. The cofactor is Mn(2+).

It is found in the cytoplasm. It catalyses the reaction 2-deoxy-alpha-D-ribose 1-phosphate = 2-deoxy-D-ribose 5-phosphate. The enzyme catalyses alpha-D-ribose 1-phosphate = D-ribose 5-phosphate. The protein operates within carbohydrate degradation; 2-deoxy-D-ribose 1-phosphate degradation; D-glyceraldehyde 3-phosphate and acetaldehyde from 2-deoxy-alpha-D-ribose 1-phosphate: step 1/2. Functionally, isomerase that catalyzes the conversion of deoxy-ribose 1-phosphate (dRib-1-P) and ribose 1-phosphate (Rib-1-P) to deoxy-ribose 5-phosphate (dRib-5-P) and ribose 5-phosphate (Rib-5-P), respectively. The polypeptide is Phosphopentomutase (Carboxydothermus hydrogenoformans (strain ATCC BAA-161 / DSM 6008 / Z-2901)).